Reading from the N-terminus, the 215-residue chain is Osmoprotectant import permease protein OsmW (215 aa).

The ABC transmembrane type-1 domain occupies 18-202 (TFQHLWLVAL…LLAIVLDWLL (185 aa)). Transmembrane regions (helical) follow at residues 24-44 (LVAL…VLIV), 51-73 (TPVL…GLMI), 78-100 (LIGH…LLPI), 132-152 (WVEI…AVVM), 153-173 (NIGV…LLLL), and 183-203 (MLIA…WLLH).

This sequence belongs to the binding-protein-dependent transport system permease family. As to quaternary structure, the complex is composed of two ATP-binding proteins (OsmV), two transmembrane proteins (OsmW and OsmY) and a solute-binding protein (OsmX).

It is found in the cell inner membrane. In terms of biological role, part of the OsmU ABC transporter complex, which is involved in the uptake of osmoprotectants such as choline-O-sulfate and glycine betaine. Probably responsible for the translocation of the substrate across the membrane. In Salmonella typhimurium (strain LT2 / SGSC1412 / ATCC 700720), this protein is Osmoprotectant import permease protein OsmW (osmW).